Reading from the N-terminus, the 631-residue chain is 1-deoxy-D-xylulose-5-phosphate synthase (631 aa).

Residues 1–21 (MPTTFHEIPRERPLTPLLDSA) form a disordered region. Residues His87 and 128–130 (GHS) contribute to the thiamine diphosphate site. Residue Asp159 participates in Mg(2+) binding. Thiamine diphosphate contacts are provided by residues 160 to 161 (GA), Asn188, Phe295, and Glu377. Asn188 is a binding site for Mg(2+).

It belongs to the transketolase family. DXPS subfamily. Homodimer. Requires Mg(2+) as cofactor. Thiamine diphosphate serves as cofactor.

It carries out the reaction D-glyceraldehyde 3-phosphate + pyruvate + H(+) = 1-deoxy-D-xylulose 5-phosphate + CO2. It functions in the pathway metabolic intermediate biosynthesis; 1-deoxy-D-xylulose 5-phosphate biosynthesis; 1-deoxy-D-xylulose 5-phosphate from D-glyceraldehyde 3-phosphate and pyruvate: step 1/1. Functionally, catalyzes the acyloin condensation reaction between C atoms 2 and 3 of pyruvate and glyceraldehyde 3-phosphate to yield 1-deoxy-D-xylulose-5-phosphate (DXP). In Ectopseudomonas mendocina (strain ymp) (Pseudomonas mendocina), this protein is 1-deoxy-D-xylulose-5-phosphate synthase.